Reading from the N-terminus, the 175-residue chain is Major MR/P fimbria protein (175 aa).

The signal sequence occupies residues Met-1 to Ala-23. Cysteines 42 and 81 form a disulfide.

The protein belongs to the fimbrial protein family.

The protein localises to the fimbrium. In terms of biological role, major structural component of mannose-resistant/proteus-like fimbriae of P.mirabilis. The polypeptide is Major MR/P fimbria protein (mrpA) (Proteus mirabilis (strain HI4320)).